A 62-amino-acid polypeptide reads, in one-letter code: Cuticle protein 6.4 (62 aa).

Functionally, component of the cuticle of migratory locust which contains more than 100 different structural proteins. This Locusta migratoria (Migratory locust) protein is Cuticle protein 6.4.